The sequence spans 400 residues: Probable peptidoglycan D,D-transpeptidase PenA (400 aa).

The disordered stretch occupies residues 1-21 (NIDGKGQEGLELSREDSLRGE). The Acyl-ester intermediate role is filled by Ser-128.

The protein belongs to the transpeptidase family. FtsI subfamily.

It localises to the cell inner membrane. It carries out the reaction Preferential cleavage: (Ac)2-L-Lys-D-Ala-|-D-Ala. Also transpeptidation of peptidyl-alanyl moieties that are N-acyl substituents of D-alanine.. Its pathway is cell wall biogenesis; peptidoglycan biosynthesis. Catalyzes cross-linking of the peptidoglycan cell wall at the division septum. In Neisseria flavescens, this protein is Probable peptidoglycan D,D-transpeptidase PenA.